The chain runs to 169 residues: MERAIFAGGCFWCMVQPFEEQAGILSVRSGYTGGHLPNPSYEQVCAKTTGHTEAVEIIFDPKQIAYKDLVELYWTQTDPTDAFGQFEDRGDNYRPVIYYTTERQKEIAEQSKANLQASGRFDQPIVTTIEPAEPFYLAEDYHQGFYKKNPKRYAQSSAIRHQFLEENWS.

Cys10 is an active-site residue.

Belongs to the MsrA Met sulfoxide reductase family.

The catalysed reaction is L-methionyl-[protein] + [thioredoxin]-disulfide + H2O = L-methionyl-(S)-S-oxide-[protein] + [thioredoxin]-dithiol. The enzyme catalyses [thioredoxin]-disulfide + L-methionine + H2O = L-methionine (S)-S-oxide + [thioredoxin]-dithiol. Its function is as follows. Has an important function as a repair enzyme for proteins that have been inactivated by oxidation. Catalyzes the reversible oxidation-reduction of methionine sulfoxide in proteins to methionine. The protein is Peptide methionine sulfoxide reductase MsrA of Streptococcus pyogenes serotype M1.